Here is a 145-residue protein sequence, read N- to C-terminus: METSDELKQRIGDLSYEVTQHAATESPFTGEYDNFFEKGIYVDIVSGEVLFSSLDKFNSGCGWPAFSKPIENRMVTNHDDSSYGMRRVEVKSREAGSHLGHVFSDGPKEAGGLRYCINSAALKFIPYDQMEKEGYAQWLTLFDET.

In terms of domain architecture, MsrB spans 4-127 (SDELKQRIGD…NSAALKFIPY (124 aa)). Cys116 acts as the Nucleophile in catalysis.

The protein belongs to the MsrB Met sulfoxide reductase family.

The enzyme catalyses L-methionyl-[protein] + [thioredoxin]-disulfide + H2O = L-methionyl-(R)-S-oxide-[protein] + [thioredoxin]-dithiol. This Streptococcus pyogenes serotype M1 protein is Peptide methionine sulfoxide reductase MsrB.